The following is a 247-amino-acid chain: UPF0280 protein Mevan_0550 (247 aa).

The protein belongs to the UPF0280 family.

In Methanococcus vannielii (strain ATCC 35089 / DSM 1224 / JCM 13029 / OCM 148 / SB), this protein is UPF0280 protein Mevan_0550.